A 1157-amino-acid chain; its full sequence is Probable inactive leucine-rich repeat receptor kinase XIAO (1157 aa).

An N-terminal signal peptide occupies residues 1–21 (MPPPPRLLFLLVMLLVVAAPG). Residue Asn58 is glycosylated (N-linked (GlcNAc...) asparagine). LRR repeat units follow at residues 101–125 (LVYLEKLSLRSNSLSGTIPASLSRI), 127–149 (SLRAVYLQYNSLSGPIPQSFLAN), 150–172 (LTNLQTFDVSGNLLSGPVPVSFP), 173–196 (PSLKYLDLSSNAFSGTIPANVSAS), 198–220 (TSLQFLNLSFNRLRGTVPASLGT), 221–245 (LQDLHYLWLDGNLLEGTIPSALSNC), 247–269 (ALLHLSLQGNALRGILPPAVAAI), 270–293 (PSLQILSVSRNRLTGAIPAAAFGG), 296–319 (NSSLRIVQVGGNAFSQVDVPVSLG), 320–343 (KDLQVVDLRANKLAGPFPSWLAGA), 344–367 (GGLTVLDLSGNAFTGEVPPAVGQL), 368–391 (TALQELRLGGNAFTGTVPAEIGRC), 393–414 (ALQVLDLEDNRFSGEVPAALGG), 415–439 (LRRLREVYLGGNSFSGQIPASLGNL), 440–463 (SWLEALSTPGNRLTGDLPSELFVL), 464–487 (GNLTFLDLSDNKLAGEIPPSIGNL), 489–511 (ALQSLNLSGNSFSGRIPSNIGNL), 513–536 (NLRVLDLSGQKNLSGNLPAELFGL), 537–559 (PQLQYVSLAGNSFSGDVPEGFSS), 561–583 (WSLRHLNLSVNSFTGSMPATYGY), 584–608 (LPSLQVLSASHNRICGELPVELANC), 609–631 (SNLTVLDLRSNQLTGPIPGDFAR), 632–656 (LGELEELDLSHNQLSRKIPPEISNC), 658–680 (SLVTLKLDDNHLGGEIPASLSNL), 681–704 (SKLQTLDLSSNNLTGSIPASLAQI), and 706–728 (GMLSLNVSQNELSGEIPAMLGSR). The N-linked (GlcNAc...) asparagine glycan is linked to Asn149. N-linked (GlcNAc...) asparagine glycosylation is found at Asn192, Asn204, and Asn244. Asn296 carries N-linked (GlcNAc...) asparagine glycosylation. A glycan (N-linked (GlcNAc...) asparagine) is linked at Asn438. N-linked (GlcNAc...) asparagine glycans are attached at residues Asn465, Asn494, and Asn524. N-linked (GlcNAc...) asparagine glycans are attached at residues Asn567, Asn607, Asn610, Asn655, Asn679, Asn692, and Asn711. The helical transmembrane segment at 765–785 (LALLIGVVAATVLLLVLFCCC) threads the bilayer. The tract at residues 804–825 (VKKRRRSPGRGSGSSGTSTDSV) is disordered. Positions 849–1144 (FDEENVLSRG…LEGCRVGPDI (296 aa)) constitute a Protein kinase domain. Residues 855–863 (LSRGRHGLV), 930–932 (DYM), 936–939 (NLAT), 980–985 (DVKPQN), and Asp998 contribute to the ATP site.

Belongs to the protein kinase superfamily. Ser/Thr protein kinase family. In terms of tissue distribution, expressed in developing culm, coleoptile, primary root, young spikelet, young leaf blade and leaf sheath, floral meristem primordia, stamen primordia, and lemma and palea primordia.

It localises to the cell membrane. Functions in the early stages of organ development by regulating cell division rate. Is probably involved in the regulation of a number of cell-cycle genes. May act as regulator of brassinosteroid (BR) signaling and cell-cycle controlling organ growth. This is Probable inactive leucine-rich repeat receptor kinase XIAO from Oryza sativa subsp. japonica (Rice).